Here is a 313-residue protein sequence, read N- to C-terminus: MNIMDYENSKRFRRNKLEEDNISDDEMENEEWDEGFGAEEFISFDEELPEYDENNPTPTCFSRWFDTQKYHYHRKIPLPIQLPKEDKKQPKQHPLKWAKFTDETEIESTMVVIGKIPLTRKRNVTNENVSFQGVANEIVVSKNIEGTKKKRNYAFTTYKNKNKKITKPIQNQLCFSITKGIECPHYSCTYIHNYSQIEHCQYNNQCRFALQVDDELYLQNNNGKCLKRHMYESIESYLLRLEIPIYNCTSLVLQVNPHVHSDCNILRRVLQNAKNCRVAPLIWQKKKVLELKTSDDSDSENNDEDDDWKIDLF.

The C3H1-type zinc finger occupies 174–199; sequence CFSITKGIECPHYSCTYIHNYSQIEH. The segment at 294–313 is disordered; it reads SDDSDSENNDEDDDWKIDLF. A compositionally biased stretch (acidic residues) spans 296 to 313; that stretch reads DSDSENNDEDDDWKIDLF.

This sequence belongs to the IIV-6 077L family.

The sequence is that of Putative zinc finger protein 077L from Invertebrate iridescent virus 6 (IIV-6).